Here is a 136-residue protein sequence, read N- to C-terminus: Thiosulfate sulfurtransferase 18 (136 aa).

One can recognise a Rhodanese domain in the interval 26 to 128 (LQSGHQYLDV…WVDHSFPINT (103 aa)). C88 serves as the catalytic Cysteine persulfide intermediate.

It localises to the cytoplasm. It catalyses the reaction thiosulfate + hydrogen cyanide = thiocyanate + sulfite + 2 H(+). Its function is as follows. Catalyzes the transfer of a sulfur ion from a donor to cyanide or to other thiol compounds. Substrate preference is thiosulfate &gt; 3-mercaptopyruvate. The polypeptide is Thiosulfate sulfurtransferase 18 (STR18) (Arabidopsis thaliana (Mouse-ear cress)).